The primary structure comprises 369 residues: Probable dual-specificity RNA methyltransferase RlmN (369 aa).

Catalysis depends on Glu-108, which acts as the Proton acceptor. The Radical SAM core domain maps to 114-351 (YPDRATLCIS…IAQGVSCTVR (238 aa)). Cys-121 and Cys-362 are oxidised to a cystine. The [4Fe-4S] cluster site is built by Cys-128, Cys-132, and Cys-135. S-adenosyl-L-methionine-binding positions include 183–184 (GE), Ser-217, 240–242 (SLH), and Asn-319. Cys-362 functions as the S-methylcysteine intermediate in the catalytic mechanism.

Belongs to the radical SAM superfamily. RlmN family. Requires [4Fe-4S] cluster as cofactor.

It is found in the cytoplasm. The catalysed reaction is adenosine(2503) in 23S rRNA + 2 reduced [2Fe-2S]-[ferredoxin] + 2 S-adenosyl-L-methionine = 2-methyladenosine(2503) in 23S rRNA + 5'-deoxyadenosine + L-methionine + 2 oxidized [2Fe-2S]-[ferredoxin] + S-adenosyl-L-homocysteine. It carries out the reaction adenosine(37) in tRNA + 2 reduced [2Fe-2S]-[ferredoxin] + 2 S-adenosyl-L-methionine = 2-methyladenosine(37) in tRNA + 5'-deoxyadenosine + L-methionine + 2 oxidized [2Fe-2S]-[ferredoxin] + S-adenosyl-L-homocysteine. In terms of biological role, specifically methylates position 2 of adenine 2503 in 23S rRNA and position 2 of adenine 37 in tRNAs. The protein is Probable dual-specificity RNA methyltransferase RlmN of Rhodococcus erythropolis (strain PR4 / NBRC 100887).